Consider the following 149-residue polypeptide: Calmodulin (149 aa).

4 EF-hand domains span residues 8–43 (QQIAEFKEAFSLFDKDSDGKITTKELGTVMRSLGQN), 44–79 (PSESELTDMINEVDVNSDGSIDFPEFLTMMARKMKD), 81–116 (DSEAEIAEAFKVFDRNGDGKISAAELRHLLTSIGEK), and 117–149 (LSDADVDQMIKEADTNNDGEIDIQEFTSLLAAK). Aspartate 21, aspartate 23, aspartate 25, lysine 27, glutamate 32, aspartate 57, asparagine 59, aspartate 61, serine 63, glutamate 68, aspartate 94, asparagine 96, aspartate 98, lysine 100, glutamate 105, aspartate 130, asparagine 132, aspartate 134, glutamate 136, and glutamate 141 together coordinate Ca(2+).

Belongs to the calmodulin family.

Calmodulin mediates the control of a large number of enzymes, ion channels and other proteins by Ca(2+). Among the enzymes to be stimulated by the calmodulin-Ca(2+) complex are a number of protein kinases and phosphatases. The protein is Calmodulin (CMD1) of Candida albicans (Yeast).